The following is an 845-amino-acid chain: Protein P (845 aa).

Positions 1–179 (MPLSYQHFRK…FCGSPYSWEQ (179 aa)) are terminal protein domain (TP). The segment at 180-348 (ELQHGRLVIK…YCLSHLVNLR (169 aa)) is spacer. Residues 226-245 (GLQPHQGPLASSQPGRSGSI) are disordered. The segment at 349–692 (EDWGPCDEHG…YMNLYPVARQ (344 aa)) is polymerase/reverse transcriptase domain (RT). The Reverse transcriptase domain maps to 359-602 (EHHIRIPRTP…YSLNFMGYII (244 aa)). Residues aspartate 431, aspartate 553, and aspartate 554 each contribute to the Mg(2+) site.

The protein belongs to the hepadnaviridae P protein family.

The enzyme catalyses DNA(n) + a 2'-deoxyribonucleoside 5'-triphosphate = DNA(n+1) + diphosphate. The catalysed reaction is Endonucleolytic cleavage to 5'-phosphomonoester.. With respect to regulation, activated by host HSP70 and HSP40 in vitro to be able to bind the epsilon loop of the pgRNA. Because deletion of the RNase H region renders the protein partly chaperone-independent, the chaperones may be needed indirectly to relieve occlusion of the RNA-binding site by this domain. Inhibited by several reverse-transcriptase inhibitors: Lamivudine, Adefovir and Entecavir. Functionally, multifunctional enzyme that converts the viral RNA genome into dsDNA in viral cytoplasmic capsids. This enzyme displays a DNA polymerase activity that can copy either DNA or RNA templates, and a ribonuclease H (RNase H) activity that cleaves the RNA strand of RNA-DNA heteroduplexes in a partially processive 3'- to 5'-endonucleasic mode. Neo-synthesized pregenomic RNA (pgRNA) are encapsidated together with the P protein, and reverse-transcribed inside the nucleocapsid. Initiation of reverse-transcription occurs first by binding the epsilon loop on the pgRNA genome, and is initiated by protein priming, thereby the 5'-end of (-)DNA is covalently linked to P protein. Partial (+)DNA is synthesized from the (-)DNA template and generates the relaxed circular DNA (RC-DNA) genome. After budding and infection, the RC-DNA migrates in the nucleus, and is converted into a plasmid-like covalently closed circular DNA (cccDNA). The activity of P protein does not seem to be necessary for cccDNA generation, and is presumably released from (+)DNA by host nuclear DNA repair machinery. This Homo sapiens (Human) protein is Protein P.